The following is a 118-amino-acid chain: NADH-quinone oxidoreductase subunit A (118 aa).

Helical transmembrane passes span 8–28, 61–81, and 86–106; these read ILIF…LNYL, FMYA…YPWA, and VLGL…VLGL.

This sequence belongs to the complex I subunit 3 family. NDH-1 is composed of 14 different subunits. Subunits NuoA, H, J, K, L, M, N constitute the membrane sector of the complex.

It localises to the cell membrane. The catalysed reaction is a quinone + NADH + 5 H(+)(in) = a quinol + NAD(+) + 4 H(+)(out). Its function is as follows. NDH-1 shuttles electrons from NADH, via FMN and iron-sulfur (Fe-S) centers, to quinones in the respiratory chain. The immediate electron acceptor for the enzyme in this species is believed to be a menaquinone. Couples the redox reaction to proton translocation (for every two electrons transferred, four hydrogen ions are translocated across the cytoplasmic membrane), and thus conserves the redox energy in a proton gradient. The chain is NADH-quinone oxidoreductase subunit A from Carboxydothermus hydrogenoformans (strain ATCC BAA-161 / DSM 6008 / Z-2901).